Consider the following 273-residue polypeptide: Large ribosomal subunit protein uL2 (273 aa).

Disordered stretches follow at residues 31–50 (APLL…GRIT) and 221–273 (RGTA…RRGK). Over residues 253–273 (KGKKTRHNKRTDKYIVRRRGK) the composition is skewed to basic residues.

Belongs to the universal ribosomal protein uL2 family. In terms of assembly, part of the 50S ribosomal subunit. Forms a bridge to the 30S subunit in the 70S ribosome.

Its function is as follows. One of the primary rRNA binding proteins. Required for association of the 30S and 50S subunits to form the 70S ribosome, for tRNA binding and peptide bond formation. It has been suggested to have peptidyltransferase activity; this is somewhat controversial. Makes several contacts with the 16S rRNA in the 70S ribosome. The polypeptide is Large ribosomal subunit protein uL2 (Actinobacillus pleuropneumoniae serotype 7 (strain AP76)).